Consider the following 193-residue polypeptide: Small ribosomal subunit protein uS7 (193 aa).

Belongs to the universal ribosomal protein uS7 family. As to quaternary structure, part of the 30S ribosomal subunit.

One of the primary rRNA binding proteins, it binds directly to 16S rRNA where it nucleates assembly of the head domain of the 30S subunit. Is located at the subunit interface close to the decoding center. The protein is Small ribosomal subunit protein uS7 of Saccharolobus solfataricus (strain ATCC 35092 / DSM 1617 / JCM 11322 / P2) (Sulfolobus solfataricus).